The following is a 205-amino-acid chain: Guanylate kinase (205 aa).

One can recognise a Guanylate kinase-like domain in the interval 7–185 (GNIFIISAAS…AEGDLLHIVN (179 aa)). 14–21 (AASGTGKT) is a binding site for ATP.

The protein belongs to the guanylate kinase family.

It localises to the cytoplasm. The catalysed reaction is GMP + ATP = GDP + ADP. Its function is as follows. Essential for recycling GMP and indirectly, cGMP. The protein is Guanylate kinase of Neisseria gonorrhoeae (strain ATCC 700825 / FA 1090).